Consider the following 1298-residue polypeptide: MSQFSTEDEAELQTLLRKLLKSVKDRISGAPSVECAEEILLHLEETDKNFHNYEFVKYLREYVESSLGAVIEVETENFTKGEGHAVGSGQDTLVHAVTKNTRESTQYKQMMQTLKQTMMMVVESLINKFEEDQMKREEMDRKIQHQQSISQYADNCSDSDSSFNQSYAFIKHEQLQVIAEKLDPGRPREVRWEALQSLCHAPPSDVLSCESWTGLRRNLSTALTDPDPELSDKVLQFFAKTFSSSPLNVTKDIYASIGNTKTLEAHFLYHKLSFPSGTTSIDANRPDMARLLKQMRLMNDFQKEVTTFWIRHPEKYMEEIIENTLSLLALHSEQGMSSPGSEKSLEPIHLISLLDIKATWFKKWMHGYYSRTVVLRLLERKYKSLIVNALQQCIYYFDSCDALSEETLEMIHSLEHQQIGPAGRTLYTSKELEFVYFVHSLCVLGRLVMYTNGRKFFPIKVKKRRDPVTLTDLVVILINIMYQHPKPSCGETALADTMSPTNLVMEVLRTLCDRTECAVECLYQIPVIETLLAPLITLLTGKLPKLNSMESALTHTADTLARIATTERGLSLLLYDRNLVSAEGESISAAHLIVQFTQKLLAKELQVENSSSMSGAFIFVCRQMYNTCEGLQVLRPYSLHECIAQAWRTTSSMSERVPTPVPGAPPALASQELQSVVAWEEMLLDNLLNFAATPKGLLLLQQTGAINECVTYMFSRFTKKLQVSRCEKFGYGVMVTQVATTAPGIVALQSSGFVQTIVVELWSALECGREDVRVVHPKSTPMDPIDRSCLKSFLSLVNLLSSPHAVWELLGHRALPNKTEYNLREMATSVLDLMDRLIIINSDAKIHSLFNYEQSHTFGLRLLSVLCCNLDSFLLLESQYKLTDLLLQGQRDNVTEPPSGEGEFIIDGLSVERNHILVRICAVGGPSERKLPPRALQKGNDPYPWPMVSTYPLPKYYIFDVPKILRTKQESEIGAFLTSSKETERDASWMDDCRRQFCKIMATKSNTLTGYVLADLLEMVVLHLSSSSNDCFFPPAEYKVVDNSVKTRSLSSVEQLGVEISLRYGKFLKLLREDSEQDLCLLLKHCQEFLSQQRVKVTSELCGYPGHDWFASTVFLLMHGDVGRSLSLLLRFSRLLPSAFLWPPRLHSSVHLPIEIAQSAIHPIYSCTAHYVEMLLKAEVPLVFSAFRMSGFTPSQICVQWLGQCFWNYLDWPEICQYVTTCVIMGPDYQVYMCVSALRHLQQDILQHTQTQDLQVFLKEEPIQGFRVSNYLEYMEGLERSYRSMVLSDMRSILPRSS.

Positions 1171–1283 (YVEMLLKAEV…YMEGLERSYR (113 aa)) constitute a Rab-GAP TBC domain.

As to quaternary structure, interacts with cdk20, which promotes cdk20 stability and function.

It is found in the cytoplasm. Its subcellular location is the cell projection. It localises to the cilium. Its function is as follows. Required for high-level Shh responses in the developing neural tube. Together with cdk20, controls the structure of the primary cilium by coordinating assembly of the ciliary membrane and axoneme, allowing gli2 to be properly activated in response to SHH signaling. The chain is Protein broad-minded (tbc1d32) from Danio rerio (Zebrafish).